Reading from the N-terminus, the 671-residue chain is DNA ligase (671 aa).

NAD(+)-binding positions include 32–36, 81–82, and E113; these read DAEYD and SL. The N6-AMP-lysine intermediate role is filled by K115. 4 residues coordinate NAD(+): R136, E173, K290, and K314. 4 residues coordinate Zn(2+): C408, C411, C426, and C432. One can recognise a BRCT domain in the interval 593 to 671; sequence EIDSPFAGKT…EAEMLRLLGS (79 aa).

This sequence belongs to the NAD-dependent DNA ligase family. LigA subfamily. It depends on Mg(2+) as a cofactor. Requires Mn(2+) as cofactor.

The enzyme catalyses NAD(+) + (deoxyribonucleotide)n-3'-hydroxyl + 5'-phospho-(deoxyribonucleotide)m = (deoxyribonucleotide)n+m + AMP + beta-nicotinamide D-nucleotide.. In terms of biological role, DNA ligase that catalyzes the formation of phosphodiester linkages between 5'-phosphoryl and 3'-hydroxyl groups in double-stranded DNA using NAD as a coenzyme and as the energy source for the reaction. It is essential for DNA replication and repair of damaged DNA. In Shigella flexneri serotype 5b (strain 8401), this protein is DNA ligase.